Reading from the N-terminus, the 590-residue chain is Phosphomethylpyrimidine synthase (590 aa).

Substrate is bound by residues Asn197, Met226, Tyr255, His291, 311–313, 352–355, and Glu391; these read SRG and DGLR. Residue His395 participates in Zn(2+) binding. Tyr418 provides a ligand contact to substrate. His459 provides a ligand contact to Zn(2+). 3 residues coordinate [4Fe-4S] cluster: Cys539, Cys542, and Cys547.

Belongs to the ThiC family. [4Fe-4S] cluster serves as cofactor.

It carries out the reaction 5-amino-1-(5-phospho-beta-D-ribosyl)imidazole + S-adenosyl-L-methionine = 4-amino-2-methyl-5-(phosphooxymethyl)pyrimidine + CO + 5'-deoxyadenosine + formate + L-methionine + 3 H(+). The protein operates within cofactor biosynthesis; thiamine diphosphate biosynthesis. Functionally, catalyzes the synthesis of the hydroxymethylpyrimidine phosphate (HMP-P) moiety of thiamine from aminoimidazole ribotide (AIR) in a radical S-adenosyl-L-methionine (SAM)-dependent reaction. This Bacillus subtilis (strain 168) protein is Phosphomethylpyrimidine synthase.